A 429-amino-acid chain; its full sequence is 3-phosphoshikimate 1-carboxyvinyltransferase (429 aa).

The 3-phosphoshikimate site is built by Lys-25, Ser-26, and Arg-30. Lys-25 is a binding site for phosphoenolpyruvate. Phosphoenolpyruvate is bound by residues Gly-99 and Arg-127. Positions 173, 174, 175, 201, 317, 340, and 344 each coordinate 3-phosphoshikimate. A phosphoenolpyruvate-binding site is contributed by Gln-175. Asp-317 (proton acceptor) is an active-site residue. Positions 348, 390, and 415 each coordinate phosphoenolpyruvate.

It belongs to the EPSP synthase family. Monomer.

The protein localises to the cytoplasm. The enzyme catalyses 3-phosphoshikimate + phosphoenolpyruvate = 5-O-(1-carboxyvinyl)-3-phosphoshikimate + phosphate. It participates in metabolic intermediate biosynthesis; chorismate biosynthesis; chorismate from D-erythrose 4-phosphate and phosphoenolpyruvate: step 6/7. In terms of biological role, catalyzes the transfer of the enolpyruvyl moiety of phosphoenolpyruvate (PEP) to the 5-hydroxyl of shikimate-3-phosphate (S3P) to produce enolpyruvyl shikimate-3-phosphate and inorganic phosphate. The sequence is that of 3-phosphoshikimate 1-carboxyvinyltransferase from Pseudoalteromonas atlantica (strain T6c / ATCC BAA-1087).